Reading from the N-terminus, the 98-residue chain is Co-chaperonin GroES (98 aa).

The protein belongs to the GroES chaperonin family. As to quaternary structure, heptamer of 7 subunits arranged in a ring. Interacts with the chaperonin GroEL.

It is found in the cytoplasm. In terms of biological role, together with the chaperonin GroEL, plays an essential role in assisting protein folding. The GroEL-GroES system forms a nano-cage that allows encapsulation of the non-native substrate proteins and provides a physical environment optimized to promote and accelerate protein folding. GroES binds to the apical surface of the GroEL ring, thereby capping the opening of the GroEL channel. The polypeptide is Co-chaperonin GroES (Bartonella tribocorum (strain CIP 105476 / IBS 506)).